We begin with the raw amino-acid sequence, 361 residues long: Chorismate synthase (361 aa).

Residues Arg48 and Arg54 each contribute to the NADP(+) site. FMN-binding positions include 125-127 (RSS), 238-239 (NA), Gly278, 293-297 (KPTSS), and Arg319.

This sequence belongs to the chorismate synthase family. Homotetramer. FMNH2 serves as cofactor.

The enzyme catalyses 5-O-(1-carboxyvinyl)-3-phosphoshikimate = chorismate + phosphate. It participates in metabolic intermediate biosynthesis; chorismate biosynthesis; chorismate from D-erythrose 4-phosphate and phosphoenolpyruvate: step 7/7. Functionally, catalyzes the anti-1,4-elimination of the C-3 phosphate and the C-6 proR hydrogen from 5-enolpyruvylshikimate-3-phosphate (EPSP) to yield chorismate, which is the branch point compound that serves as the starting substrate for the three terminal pathways of aromatic amino acid biosynthesis. This reaction introduces a second double bond into the aromatic ring system. The protein is Chorismate synthase of Salmonella dublin (strain CT_02021853).